The sequence spans 338 residues: Homeobox protein ceh-20 (338 aa).

One can recognise a PBC domain in the interval 4–187 (THPANLSELL…VMILRSRFLD (184 aa)). Residues 11–91 (ELLDAVLKIN…EGVAGPDKGG (81 aa)) are PBC-A. Residues 94–187 (GSDASGGDQA…VMILRSRFLD (94 aa)) form a PBC-B region. The homeobox; TALE-type DNA-binding region spans 188-250 (ARRKRRNFSK…NKRIRYKKNM (63 aa)).

Belongs to the TALE/PBX homeobox family. In terms of assembly, interacts with Meis protein psa-3. Interacts with homeobox protein nob-1. Expressed in head dopaminergic neurons.

It is found in the nucleus. Its function is as follows. Transcription factor that binds to the 5'-TGATNNAT(G/T)(G/A)-3' PBC/Hox lineage enhancer region of sem-2 to promote cell fate specification in the postembryonic mesoderm (also known as the M lineage). Required for the M lineage-specific expression of the transcription factor, mls-2. Required for asymmetric division of the T hypodermal cell, probably acting via the regulation of asymmetric expression of Meis protein psa-3 in concert with homeobox protein nob-1 and the Wnt-MAPK pathway. Has a role in the mig-13 pathway to promote the guidance, migration and positioning of Q neuroblasts and their descendants along the anteroposterior body axis and the anterior migration of BDU interneurons. Also required for normal vulval formation. Plays a role in regulating gene expression in dopaminergic neurons, acting in midbody PDE neurons, and acting redundantly with ceh-40 in head neurons. May activate dopamine pathway genes in concert with ETS domain-containing protein ast-1, and homeobox proteins ceh-43 and ceh-40. The protein is Homeobox protein ceh-20 of Caenorhabditis elegans.